The chain runs to 460 residues: UDP-N-acetylmuramate--L-alanine ligase (460 aa).

Gly-118–Thr-124 provides a ligand contact to ATP.

This sequence belongs to the MurCDEF family.

Its subcellular location is the cytoplasm. The catalysed reaction is UDP-N-acetyl-alpha-D-muramate + L-alanine + ATP = UDP-N-acetyl-alpha-D-muramoyl-L-alanine + ADP + phosphate + H(+). It functions in the pathway cell wall biogenesis; peptidoglycan biosynthesis. Its function is as follows. Cell wall formation. In Clostridium botulinum (strain Alaska E43 / Type E3), this protein is UDP-N-acetylmuramate--L-alanine ligase.